The following is a 542-amino-acid chain: Doublesex- and mab-3-related transcription factor A2 (542 aa).

Positions cysteine 70–arginine 117 form a DNA-binding region, DM. Positions leucine 201–proline 316 are disordered. Positions arginine 314–glutamine 349 constitute a DMA domain.

Belongs to the DMRT family. Expressed in testis.

Its subcellular location is the nucleus. Its function is as follows. May be involved in sexual development. The sequence is that of Doublesex- and mab-3-related transcription factor A2 (DMRTA2) from Homo sapiens (Human).